Reading from the N-terminus, the 206-residue chain is Ribosomal RNA small subunit methyltransferase G (206 aa).

Residues Gly73, Leu78, 124 to 125, and Arg139 contribute to the S-adenosyl-L-methionine site; that span reads VE.

The protein belongs to the methyltransferase superfamily. RNA methyltransferase RsmG family.

Its subcellular location is the cytoplasm. The catalysed reaction is guanosine(527) in 16S rRNA + S-adenosyl-L-methionine = N(7)-methylguanosine(527) in 16S rRNA + S-adenosyl-L-homocysteine. Functionally, specifically methylates the N7 position of guanine in position 527 of 16S rRNA. The polypeptide is Ribosomal RNA small subunit methyltransferase G (Serratia proteamaculans (strain 568)).